Consider the following 1040-residue polypeptide: Multidrug resistance protein MdtB (1040 aa).

The next 12 helical transmembrane spans lie at 25 to 45, 342 to 362, 369 to 389, 396 to 416, 440 to 460, 472 to 492, 537 to 557, 863 to 883, 888 to 908, 911 to 931, 967 to 987, and 998 to 1018; these read LLMVAILLAGIIGYRFLPVAA, DTQFELMLAIALVVMIIYLFL, IIPGVAVPLSLIGTFAVMVFL, LTLMALTIATGFVVDDAIVVI, IGFTIISLTFSLIAVLIPLLF, FAVTLAVAILISAVVSLTLTP, WLTLSVALGTLLLSIMLWVFI, LGSTVWLIVAAVVAMYIVLGV, FIHPITILSTLPTAGVGALLA, IAGSELDVIAIIGIILLIGIV, PILMTTLAALLGALPLMLSTG, and IGMVGGLLVSQVLTLFTTPVI.

It belongs to the resistance-nodulation-cell division (RND) (TC 2.A.6) family. MdtB subfamily. In terms of assembly, part of a tripartite efflux system composed of MdtA, MdtB and MdtC. MdtB forms a heteromultimer with MdtC.

Its subcellular location is the cell inner membrane. The sequence is that of Multidrug resistance protein MdtB from Citrobacter koseri (strain ATCC BAA-895 / CDC 4225-83 / SGSC4696).